A 163-amino-acid polypeptide reads, in one-letter code: Transcription antitermination protein NusB (163 aa).

Belongs to the NusB family.

Functionally, involved in transcription antitermination. Required for transcription of ribosomal RNA (rRNA) genes. Binds specifically to the boxA antiterminator sequence of the ribosomal RNA (rrn) operons. The sequence is that of Transcription antitermination protein NusB from Chlorobium luteolum (strain DSM 273 / BCRC 81028 / 2530) (Pelodictyon luteolum).